Here is a 622-residue protein sequence, read N- to C-terminus: Threonine--tRNA ligase (622 aa).

The editing domain stretch occupies residues 1–134 (MKTLLIHSDY…GHPLSELSRK (134 aa)). Residues 199–498 (PHVKYIKEKE…TLEDKPPALP (300 aa)) are catalytic. The Zn(2+) site is built by C291, H343, and H467.

The protein belongs to the class-II aminoacyl-tRNA synthetase family. In terms of assembly, homodimer. It depends on Zn(2+) as a cofactor.

It localises to the cytoplasm. The catalysed reaction is tRNA(Thr) + L-threonine + ATP = L-threonyl-tRNA(Thr) + AMP + diphosphate + H(+). Functionally, catalyzes the attachment of threonine to tRNA(Thr) in a two-step reaction: L-threonine is first activated by ATP to form Thr-AMP and then transferred to the acceptor end of tRNA(Thr). Also edits incorrectly charged L-seryl-tRNA(Thr). The chain is Threonine--tRNA ligase from Methanococcus vannielii (strain ATCC 35089 / DSM 1224 / JCM 13029 / OCM 148 / SB).